A 363-amino-acid polypeptide reads, in one-letter code: UDP-N-acetylglucosamine--N-acetylmuramyl-(pentapeptide) pyrophosphoryl-undecaprenol N-acetylglucosamine transferase (363 aa).

UDP-N-acetyl-alpha-D-glucosamine-binding positions include 15–17 (TGG), asparagine 127, arginine 163, serine 191, isoleucine 244, 263–268 (ALTVSE), and glutamine 288.

The protein belongs to the glycosyltransferase 28 family. MurG subfamily.

It is found in the cell inner membrane. The catalysed reaction is di-trans,octa-cis-undecaprenyl diphospho-N-acetyl-alpha-D-muramoyl-L-alanyl-D-glutamyl-meso-2,6-diaminopimeloyl-D-alanyl-D-alanine + UDP-N-acetyl-alpha-D-glucosamine = di-trans,octa-cis-undecaprenyl diphospho-[N-acetyl-alpha-D-glucosaminyl-(1-&gt;4)]-N-acetyl-alpha-D-muramoyl-L-alanyl-D-glutamyl-meso-2,6-diaminopimeloyl-D-alanyl-D-alanine + UDP + H(+). It participates in cell wall biogenesis; peptidoglycan biosynthesis. In terms of biological role, cell wall formation. Catalyzes the transfer of a GlcNAc subunit on undecaprenyl-pyrophosphoryl-MurNAc-pentapeptide (lipid intermediate I) to form undecaprenyl-pyrophosphoryl-MurNAc-(pentapeptide)GlcNAc (lipid intermediate II). This chain is UDP-N-acetylglucosamine--N-acetylmuramyl-(pentapeptide) pyrophosphoryl-undecaprenol N-acetylglucosamine transferase, found in Pectobacterium carotovorum subsp. carotovorum (strain PC1).